The primary structure comprises 141 residues: Cystatin (141 aa).

The signal sequence occupies residues 1–26 (MVHSQLPVAAPLRLLCALLLLPSATM). Positions 29–129 (GGLSPRSVTD…CHFQVWSRPW (101 aa)) constitute a Cystatin domain. The short motif at 73–77 (QVVAG) is the Secondary area of contact element. 2 disulfide bridges follow: cysteine 91–cysteine 107 and cysteine 120–cysteine 140.

This sequence belongs to the cystatin family. In terms of tissue distribution, expressed at a low level by the venom gland (at protein level).

It is found in the secreted. Its function is as follows. Inhibits various C1 cysteine proteases including cathepsin L, papain and cathepsin B. This protein has no toxic activity and its function in the venom is unknown. It may play a role as a housekeeping or regulatory protein. This is Cystatin from Oxyuranus scutellatus scutellatus (Australian taipan).